Consider the following 780-residue polypeptide: Pendrin (780 aa).

Over 1-87 (MAAPGGRSEP…YRVKEWLLSD (87 aa)) the chain is Cytoplasmic. The chain crosses the membrane as a helical span at residues 88–108 (VISGVSTGLVATLQGMAYALL). Alanine 109 is a topological domain (extracellular). A helical membrane pass occupies residues 110–130 (AVPVGYGLYSAFFPILTYFIF). The Cytoplasmic segment spans residues 131 to 135 (GTSRH). The chain crosses the membrane as a helical span at residues 136–156 (ISVGPFPVVSLMVGSVVLSMA). The Extracellular portion of the chain corresponds to 157-191 (PDEHFLVSSSNGTVLNTTMIDTAARDTARVLIASA). Residues 192-212 (LTLLVGIIQLIFGGLQIGFIV) form a helical membrane-spanning segment. Over 213–218 (RYLADP) the chain is Cytoplasmic. The chain crosses the membrane as a helical span at residues 219–239 (LVGGFTTAAAFQVLVSQLKIV). Residues 240–263 (LNVSTKNYNGVLSIIYTLVEIFQN) are Extracellular-facing. Residues 264–284 (IGDTNLADFTAGLLTIVVCMA) traverse the membrane as a helical segment. Residues 285 to 295 (VKELNDRFRHK) lie on the Cytoplasmic side of the membrane. A helical transmembrane segment spans residues 296–316 (IPVPIPIEVIVTIIATAISYG). Residues 317–344 (ANLEKNYNAGIVKSIPRGFLPPELPPVS) are Extracellular-facing. A helical transmembrane segment spans residues 345-365 (LFSEMLAASFSIAVVAYAIAV). Residues 366–384 (SVGKVYATKYDYTIDGNQE) lie on the Cytoplasmic side of the membrane. A helical transmembrane segment spans residues 385 to 405 (FIAFGISNIFSGFFSCFVATT). Residues 406–421 (ALSRTAVQESTGGKTQ) lie on the Extracellular side of the membrane. Residues 422 to 442 (VAGIISAAIVMIAILALGKLL) traverse the membrane as a helical segment. Over 443 to 448 (EPLQKS) the chain is Cytoplasmic. A helical transmembrane segment spans residues 449 to 469 (VLAAVVIANLKGMFMQLCDIP). The Extracellular portion of the chain corresponds to 470–486 (RLWRQNKIDAVIWVFTC). A helical transmembrane segment spans residues 487-507 (IVSIILGLDLGLLAGLIFGLL). Over 508–780 (TVVLRVQFPS…QDEAMRTLAS (273 aa)) the chain is Cytoplasmic. Positions 535–729 (NYKNIEEPQG…LTVHDAILYL (195 aa)) constitute an STAS domain.

This sequence belongs to the SLC26A/SulP transporter (TC 2.A.53) family. Interacts with IQGAP1; this interaction enhances the chloride-bicarbonate exchange activity of SLC26A4. Highly expressed in the kidney (at protein level). High expression in adult thyroid, lower expression in adult and fetal kidney and fetal brain. Not expressed in other tissues.

It is found in the cell membrane. The protein resides in the apical cell membrane. The enzyme catalyses chloride(in) = chloride(out). The catalysed reaction is iodide(out) = iodide(in). It carries out the reaction hydrogencarbonate(in) + chloride(out) = hydrogencarbonate(out) + chloride(in). It catalyses the reaction iodide(in) + hydrogencarbonate(out) = iodide(out) + hydrogencarbonate(in). The enzyme catalyses iodide(in) + chloride(out) = iodide(out) + chloride(in). The catalysed reaction is formate(in) + chloride(out) = formate(out) + chloride(in). Functionally, sodium-independent transporter of chloride and iodide. Mediates electroneutral chloride-bicarbonate, chloride-iodide and chloride-formate exchange with 1:1 stoichiometry. Mediates electroneutral iodide-bicarbonate exchange. This is Pendrin (SLC26A4) from Homo sapiens (Human).